A 465-amino-acid polypeptide reads, in one-letter code: Tetratricopeptide repeat protein 38 (465 aa).

TPR repeat units follow at residues 104-137 (REQLHVSAVEMFAKGNFPRACDLWEQILRDHPTD), 176-209 (SYVKGIYSFGLMETNFYDQAQKLAKEALSIEPTD), and 248-281 (CHNYWHWALYLIEKGDYEAALTIYDSHILPSLQA).

This sequence belongs to the TTC38 family.

The sequence is that of Tetratricopeptide repeat protein 38 (Ttc38) from Mus musculus (Mouse).